The primary structure comprises 187 residues: Auxin-binding protein T92 (187 aa).

A signal peptide spans 1-20; it reads MARHIIILVAVFWFATAEAS. Cysteine 22 and cysteine 177 form a disulfide bridge. Histidine 78, histidine 80, and glutamate 84 together coordinate Zn(2+). Asparagine 117 carries N-linked (GlcNAc...) asparagine glycosylation. A Zn(2+)-binding site is contributed by histidine 128. The short motif at 184-187 is the Prevents secretion from ER element; sequence KDEL.

Homodimer.

The protein resides in the endoplasmic reticulum lumen. In terms of biological role, this is probably a receptor for the plant hormone auxin. The chain is Auxin-binding protein T92 (T92) from Nicotiana tabacum (Common tobacco).